A 138-amino-acid polypeptide reads, in one-letter code: Cytosolic calcium-binding protein 2 (138 aa).

Residues 31 to 41 (TEVTQQPEESV) are compositionally biased toward low complexity. The interval 31–122 (TEVTQQPEES…KKTEVVEEKQ (92 aa)) is disordered. 6 consecutive repeat copies span residues 62–68 (VEEAEKK), 71–75 (ETEKK), 92–98 (VEEEEKK), 109–114 (VEEEKK), 118–122 (VEEKQ), and 131–135 (VAVEK). The tract at residues 62 to 135 (VEEAEKKDEE…AAAEEVAVEK (74 aa)) is 6 X 5 AA approximate repeats of V-E-E-K-K. A compositionally biased stretch (basic and acidic residues) spans 64 to 85 (EAEKKDEETEKKTEEKDEKTEV). Positions 110–122 (EEEKKTEVVEEKQ) are enriched in basic and acidic residues.

Predominantly expressed in roots (e.g. in endodermis in the stele) and stems, to a lower extent in shoots, flowers and siliques, and, at low levels, in leaves.

It is found in the cytoplasm. Its subcellular location is the cytosol. In terms of biological role, binds calcium Ca(2+) and may act as a signal mediator to buffer Ca(2+). In Arabidopsis thaliana (Mouse-ear cress), this protein is Cytosolic calcium-binding protein 2.